A 1328-amino-acid chain; its full sequence is Protein turtle homolog B (1328 aa).

Positions 1-20 are cleaved as a signal peptide; it reads MIWYVATLIASVISTRGLVA. Residues 21 to 722 lie on the Extracellular side of the membrane; the sequence is QVAHGLREEP…DLTDDGLARP (702 aa). 5 consecutive Ig-like domains span residues 30–115, 139–226, 228–320, 324–415, and 420–504; these read PEFV…ECKV, PTFT…LLVQ, PPFI…AYLT, PARV…ARLV, and PYFT…THLT. Disulfide bonds link C45–C113 and C161–C208. N241 and N258 each carry an N-linked (GlcNAc...) asparagine glycan. Intrachain disulfides connect C250–C303, C346–C397, and C442–C488. 2 consecutive Fibronectin type-III domains span residues 512-604 and 614-708; these read APGS…TLAF and LVTP…STDI. N-linked (GlcNAc...) asparagine glycosylation is present at N624. A helical membrane pass occupies residues 723–743; sequence VLAGIVATICFLAAAILFSTL. At 744–1328 the chain is on the cytoplasmic side; it reads AACFVNKQRK…EPPTTLPTSG (585 aa). Disordered regions lie at residues 758–817, 914–1040, and 1107–1328; these read RKKD…EKEL, PMSS…PEPW, and SPGR…PTSG. Phosphoserine is present on residues S775, S783, and S794. The segment covering 990 to 1001 has biased composition (low complexity); sequence SPLSSVMSSPPL. Polar residues-rich tracts occupy residues 1018–1033, 1129–1141, and 1199–1214; these read ENAS…TPTG, LVSQ…TSQG, and SRLS…SRTG. The residue at position 1136 (R1136) is an Omega-N-methylarginine. Residues S1207 and S1215 each carry the phosphoserine modification. A compositionally biased stretch (low complexity) spans 1246–1273; the sequence is SFSRKSTPSSTGSPSQSSRSGSPSYRPT. 2 stretches are compositionally biased toward pro residues: residues 1284–1295 and 1318–1328; these read PSPPPGPAPPAP and PEPPTTLPTSG.

It belongs to the immunoglobulin superfamily. Turtle family. As to quaternary structure, found in a complex with MAGI2 and NLGN2, where it interacts with MAGI2 (via PDZ 5 and PDZ 6 domains). Post-translationally, N-glycosylated and sialylated. Not significantly O-glycosylated. As to expression, detected primarily in brain, including cortex, hippocampus, cerebellum and striatum. Largely restricted to inhibitory GABAergic interneurons (at protein level).

Its subcellular location is the postsynaptic cell membrane. It is found in the postsynaptic density. Functionally, transmembrane protein which is abundantly expressed in interneurons, where it may regulate inhibitory synapse development. May mediate homophilic cell adhesion. This is Protein turtle homolog B from Rattus norvegicus (Rat).